A 538-amino-acid chain; its full sequence is Ribulokinase 1 (538 aa).

The protein belongs to the ribulokinase family.

The enzyme catalyses D-ribulose + ATP = D-ribulose 5-phosphate + ADP + H(+). It carries out the reaction L-ribulose + ATP = L-ribulose 5-phosphate + ADP + H(+). It participates in carbohydrate degradation; L-arabinose degradation via L-ribulose; D-xylulose 5-phosphate from L-arabinose (bacterial route): step 2/3. This Staphylococcus saprophyticus subsp. saprophyticus (strain ATCC 15305 / DSM 20229 / NCIMB 8711 / NCTC 7292 / S-41) protein is Ribulokinase 1.